Reading from the N-terminus, the 428-residue chain is Cholecystokinin receptor type A (428 aa).

Residues 1-41 (MEVADSLLGNGSDVPPPCELGLENETLVCLEQPRAAKEWQP) are Extracellular-facing. Residues Asn-10 and Asn-24 are each glycosylated (N-linked (GlcNAc...) asparagine). An intrachain disulfide couples Cys-18 to Cys-29. The helical transmembrane segment at 42 to 67 (AVQILLYSLIFLLSVLGNTLVITVLI) threads the bilayer. The Cytoplasmic segment spans residues 68 to 77 (RNKRMRTVTN). Residues 78 to 104 (IFLLSLAVSDLMLCLFCMPFNLIPNLL) traverse the membrane as a helical segment. The Extracellular segment spans residues 105–115 (KDFIFGSAVCK). Residues Cys-114 and Cys-196 are joined by a disulfide bond. Residues 116 to 137 (TTTYFMGTSVSVSTFNLVAISL) traverse the membrane as a helical segment. Residues 138-157 (ERYGAICKPLQSRVWQTKSH) lie on the Cytoplasmic side of the membrane. Residues 158–178 (ALKVIATTWCLSFTIMTPYPI) traverse the membrane as a helical segment. Residues 179 to 210 (YSNLVPFTKTNNQTANMCRFLLPNDVMQQSWH) lie on the Extracellular side of the membrane. Asn-190 carries an N-linked (GlcNAc...) asparagine glycan. A helical membrane pass occupies residues 211–234 (TFLLLILFLIPGIVMMVAYGLISL). Topologically, residues 235–313 (ELYQGIKFDA…NLMAKKRVIR (79 aa)) are cytoplasmic. A disordered region spans residues 250-269 (ARDRNPSTGSSGRYEDGDGC). The helical transmembrane segment at 314 to 334 (MLMVIVVLFFLCWMPIFSANA) threads the bilayer. At 335–349 (WRAYDTASAERRLSG) the chain is on the extracellular side. Residues 350 to 373 (TPISFILLLSYTSSCVNPIIYCFM) form a helical membrane-spanning segment. Topologically, residues 374–428 (NKRFRLGFLATFPCCPHPGPPGPRGEVGEEEEGRTTGASLSRYSYSHMSASAPGP) are cytoplasmic. Cys-387 is lipidated: S-palmitoyl cysteine. The tract at residues 393–428 (PPGPRGEVGEEEEGRTTGASLSRYSYSHMSASAPGP) is disordered. Residues 409 to 422 (TGASLSRYSYSHMS) show a composition bias toward polar residues.

This sequence belongs to the G-protein coupled receptor 1 family.

The protein localises to the cell membrane. In terms of biological role, receptor for cholecystokinin. Mediates pancreatic growth and enzyme secretion, smooth muscle contraction of the gall bladder and stomach. Has a 1000-fold higher affinity for CCK rather than for gastrin. It modulates feeding and dopamine-induced behavior in the central and peripheral nervous system. This receptor mediates its action by association with G proteins that activate a phosphatidylinositol-calcium second messenger system. This Canis lupus familiaris (Dog) protein is Cholecystokinin receptor type A (CCKAR).